A 358-amino-acid chain; its full sequence is DNA polymerase IV (358 aa).

Residues 6-187 (IIHIDMDYFF…LDIGDFPGVG (182 aa)) enclose the UmuC domain. Residues Asp-10 and Asp-105 each contribute to the Mg(2+) site. The active site involves Glu-106.

This sequence belongs to the DNA polymerase type-Y family. As to quaternary structure, monomer. The cofactor is Mg(2+).

It is found in the cytoplasm. It carries out the reaction DNA(n) + a 2'-deoxyribonucleoside 5'-triphosphate = DNA(n+1) + diphosphate. Poorly processive, error-prone DNA polymerase involved in untargeted mutagenesis. Copies undamaged DNA at stalled replication forks, which arise in vivo from mismatched or misaligned primer ends. These misaligned primers can be extended by PolIV. Exhibits no 3'-5' exonuclease (proofreading) activity. May be involved in translesional synthesis, in conjunction with the beta clamp from PolIII. The sequence is that of DNA polymerase IV from Staphylococcus haemolyticus (strain JCSC1435).